Consider the following 545-residue polypeptide: T-complex protein 1 subunit gamma (545 aa).

At Met1 the chain carries N-acetylmethionine. A disordered region spans residues 1-24 (MMGHRPVLVLSQNTKRESGRKVQS). Position 11 is a phosphoserine (Ser11). Residue Lys15 forms a Glycyl lysine isopeptide (Lys-Gly) (interchain with G-Cter in SUMO2) linkage. Gly42 provides a ligand contact to ADP. Gly42 lines the ATP pocket. Asp93 contributes to the Mg(2+) binding site. ADP contacts are provided by Gly94, Thr95, Thr96, Ser97, Thr162, and Lys163. Positions 94, 95, and 96 each coordinate ATP. At Ser170 the chain carries Phosphoserine. Lys222 is modified (N6-acetyllysine). Residues Ser243 and Ser244 each carry the phosphoserine modification. Residue Tyr247 is modified to Phosphotyrosine. Residues Lys248 and Lys249 each participate in a glycyl lysine isopeptide (Lys-Gly) (interchain with G-Cter in SUMO2) cross-link. Position 252 is a phosphoserine (Ser252). A disulfide bridge connects residues Cys366 and Cys372. Lys381 is covalently cross-linked (Glycyl lysine isopeptide (Lys-Gly) (interchain with G-Cter in SUMO2)). Residue Gly411 participates in ADP binding. Gly411 serves as a coordination point for ATP. Residues Thr430 and Thr459 each carry the phosphothreonine modification. ADP contacts are provided by Gly482, Glu483, Glu497, and Lys502. Residue Gly482 participates in ATP binding. Glu497 contributes to the ATP binding site. The segment at 526–545 (HKKKGDDQSRQGGAPDAGQE) is disordered.

It belongs to the TCP-1 chaperonin family. As to quaternary structure, component of the chaperonin-containing T-complex (TRiC), a hexadecamer composed of two identical back-to-back stacked rings enclosing a protein folding chamber. Each ring is made up of eight different subunits: TCP1/CCT1, CCT2, CCT3, CCT4, CCT5, CCT6A/CCT6, CCT7, CCT8. Interacts with PACRG. Interacts with DNAAF4. Interacts with DLEC1.

The protein localises to the cytoplasm. It catalyses the reaction ATP + H2O = ADP + phosphate + H(+). Functionally, component of the chaperonin-containing T-complex (TRiC), a molecular chaperone complex that assists the folding of actin, tubulin and other proteins upon ATP hydrolysis. The TRiC complex mediates the folding of WRAP53/TCAB1, thereby regulating telomere maintenance. As part of the TRiC complex may play a role in the assembly of BBSome, a complex involved in ciliogenesis regulating transports vesicles to the cilia. The polypeptide is T-complex protein 1 subunit gamma (CCT3) (Homo sapiens (Human)).